The chain runs to 348 residues: tRNA pseudouridine synthase D (348 aa).

Asp84 (nucleophile) is an active-site residue. In terms of domain architecture, TRUD spans Gly162–Leu308.

This sequence belongs to the pseudouridine synthase TruD family.

It carries out the reaction uridine(13) in tRNA = pseudouridine(13) in tRNA. Functionally, responsible for synthesis of pseudouridine from uracil-13 in transfer RNAs. This chain is tRNA pseudouridine synthase D, found in Chromohalobacter salexigens (strain ATCC BAA-138 / DSM 3043 / CIP 106854 / NCIMB 13768 / 1H11).